A 96-amino-acid chain; its full sequence is MKIQPLGDRLVVKVAEVAAEKTKSGLYVPDTAKEKPQEGEVLAVGPGAFNDKGERMPMDVAVGDKIIFSKYGGTEIKIDGEEYLVMSQRDILAKIN.

Belongs to the GroES chaperonin family. As to quaternary structure, heptamer of 7 subunits arranged in a ring. Interacts with the chaperonin GroEL.

It localises to the cytoplasm. In terms of biological role, together with the chaperonin GroEL, plays an essential role in assisting protein folding. The GroEL-GroES system forms a nano-cage that allows encapsulation of the non-native substrate proteins and provides a physical environment optimized to promote and accelerate protein folding. GroES binds to the apical surface of the GroEL ring, thereby capping the opening of the GroEL channel. The protein is Co-chaperonin GroES of Syntrophomonas wolfei subsp. wolfei (strain DSM 2245B / Goettingen).